A 463-amino-acid polypeptide reads, in one-letter code: Fumarate hydratase class II (463 aa).

Substrate is bound by residues 97-99 (SGT), 128-131 (HPND), 138-140 (SSN), and threonine 186. The active-site Proton donor/acceptor is the histidine 187. Residue serine 317 is part of the active site. Substrate-binding positions include serine 318 and 323–325 (KVN).

This sequence belongs to the class-II fumarase/aspartase family. Fumarase subfamily. As to quaternary structure, homotetramer.

The protein resides in the cytoplasm. The enzyme catalyses (S)-malate = fumarate + H2O. It participates in carbohydrate metabolism; tricarboxylic acid cycle; (S)-malate from fumarate: step 1/1. Its function is as follows. Involved in the TCA cycle. Catalyzes the stereospecific interconversion of fumarate to L-malate. This is Fumarate hydratase class II from Campylobacter jejuni subsp. jejuni serotype O:2 (strain ATCC 700819 / NCTC 11168).